A 460-amino-acid polypeptide reads, in one-letter code: Ribosomal protein uS12 methylthiotransferase RimO (460 aa).

The MTTase N-terminal domain maps to 16-130 (NKIHFISLGC…ILSAIESKEY (115 aa)). Residues cysteine 25, cysteine 61, cysteine 93, cysteine 164, cysteine 168, and cysteine 171 each contribute to the [4Fe-4S] cluster site. The Radical SAM core domain maps to 150–382 (STPKHYAYLK…SQAQKQNVEK (233 aa)). The 71-residue stretch at 385–455 (QKLVGQVVEA…GYDLIGRVVK (71 aa)) folds into the TRAM domain.

Belongs to the methylthiotransferase family. RimO subfamily. [4Fe-4S] cluster is required as a cofactor.

It localises to the cytoplasm. It carries out the reaction L-aspartate(89)-[ribosomal protein uS12]-hydrogen + (sulfur carrier)-SH + AH2 + 2 S-adenosyl-L-methionine = 3-methylsulfanyl-L-aspartate(89)-[ribosomal protein uS12]-hydrogen + (sulfur carrier)-H + 5'-deoxyadenosine + L-methionine + A + S-adenosyl-L-homocysteine + 2 H(+). Its function is as follows. Catalyzes the methylthiolation of an aspartic acid residue of ribosomal protein uS12. In Chlamydia felis (strain Fe/C-56) (Chlamydophila felis), this protein is Ribosomal protein uS12 methylthiotransferase RimO.